Reading from the N-terminus, the 247-residue chain is Caffeoyl-CoA O-methyltransferase 1 (247 aa).

Position 21 (Lys21) interacts with substrate. S-adenosyl-L-methionine-binding positions include Thr63, Glu85, 87 to 88 (GV), Ser93, Asp111, and Ala140. Asp163 contacts substrate. Asp163 lines the a divalent metal cation pocket. Asp165 contributes to the S-adenosyl-L-methionine binding site. A divalent metal cation-binding residues include Asp189 and Asn190. Asn194 is a binding site for substrate.

The protein belongs to the class I-like SAM-binding methyltransferase superfamily. Cation-dependent O-methyltransferase family. CCoAMT subfamily. A divalent metal cation serves as cofactor.

It catalyses the reaction (E)-caffeoyl-CoA + S-adenosyl-L-methionine = (E)-feruloyl-CoA + S-adenosyl-L-homocysteine + H(+). Its pathway is aromatic compound metabolism; phenylpropanoid biosynthesis. Methylates caffeoyl-CoA to feruloyl-CoA and 5-hydroxyferuloyl-CoA to sinapoyl-CoA. Plays a role in the synthesis of feruloylated polysaccharides. Involved in the reinforcement of the plant cell wall. Also involved in the responding to wounding or pathogen challenge by the increased formation of cell wall-bound ferulic acid polymers. This Populus trichocarpa (Western balsam poplar) protein is Caffeoyl-CoA O-methyltransferase 1 (CCOAOMT1).